The sequence spans 295 residues: Protease HtpX (295 aa).

Helical transmembrane passes span Ile-4 to Leu-24 and Gly-41 to Ile-61. His-147 provides a ligand contact to Zn(2+). Glu-148 is a catalytic residue. His-151 contacts Zn(2+). 2 helical membrane passes run Val-158 to Ile-178 and Phe-198 to Trp-218. Glu-224 lines the Zn(2+) pocket.

The protein belongs to the peptidase M48B family. Requires Zn(2+) as cofactor.

The protein resides in the cell inner membrane. This Pseudomonas entomophila (strain L48) protein is Protease HtpX.